The chain runs to 362 residues: Molybdenum import ATP-binding protein ModC (362 aa).

The ABC transporter domain occupies 2–236 (ASPIEVRLHM…LDLPLAMGGD (235 aa)). An ATP-binding site is contributed by 34–41 (GPSGSGKT). Positions 297 to 362 (QSSILNRLPV…AQIKAVAVLA (66 aa)) constitute a Mop domain.

The protein belongs to the ABC transporter superfamily. Molybdate importer (TC 3.A.1.8) family. In terms of assembly, the complex is composed of two ATP-binding proteins (ModC), two transmembrane proteins (ModB) and a solute-binding protein (ModA).

It is found in the cell inner membrane. It carries out the reaction molybdate(out) + ATP + H2O = molybdate(in) + ADP + phosphate + H(+). Part of the ABC transporter complex ModABC involved in molybdenum import. Responsible for energy coupling to the transport system. This is Molybdenum import ATP-binding protein ModC from Pseudomonas savastanoi pv. phaseolicola (strain 1448A / Race 6) (Pseudomonas syringae pv. phaseolicola (strain 1448A / Race 6)).